Here is a 244-residue protein sequence, read N- to C-terminus: Methylthioribulose-1-phosphate dehydratase (244 aa).

Cys-89 lines the substrate pocket. Residues His-107 and His-109 each contribute to the Zn(2+) site. The Proton donor/acceptor role is filled by Glu-130. Residue His-192 coordinates Zn(2+).

Belongs to the aldolase class II family. MtnB subfamily. Requires Zn(2+) as cofactor.

The protein localises to the cytoplasm. It carries out the reaction 5-(methylsulfanyl)-D-ribulose 1-phosphate = 5-methylsulfanyl-2,3-dioxopentyl phosphate + H2O. The protein operates within amino-acid biosynthesis; L-methionine biosynthesis via salvage pathway; L-methionine from S-methyl-5-thio-alpha-D-ribose 1-phosphate: step 2/6. Functionally, catalyzes the dehydration of methylthioribulose-1-phosphate (MTRu-1-P) into 2,3-diketo-5-methylthiopentyl-1-phosphate (DK-MTP-1-P). This chain is Methylthioribulose-1-phosphate dehydratase, found in Saccharomyces cerevisiae (strain ATCC 204508 / S288c) (Baker's yeast).